A 139-amino-acid chain; its full sequence is Small ribosomal subunit protein uS11 (139 aa).

The segment covering 1–13 (MAKQAAKGSAAAT) has biased composition (low complexity). The segment at 1 to 30 (MAKQAAKGSAAATKRQRGKRREKKNVPRGQ) is disordered. A compositionally biased stretch (basic residues) spans 14–23 (KRQRGKRREK).

It belongs to the universal ribosomal protein uS11 family. In terms of assembly, part of the 30S ribosomal subunit. Interacts with proteins S7 and S18. Binds to IF-3.

Functionally, located on the platform of the 30S subunit, it bridges several disparate RNA helices of the 16S rRNA. Forms part of the Shine-Dalgarno cleft in the 70S ribosome. The protein is Small ribosomal subunit protein uS11 of Roseiflexus sp. (strain RS-1).